The sequence spans 244 residues: Claudin-12 (244 aa).

Over 1-10 the chain is Cytoplasmic; that stretch reads MGCRDVHAAT. A helical membrane pass occupies residues 11–31; the sequence is VLSFLCGIASVAGLFAGTLLP. Residues 32–87 lie on the Extracellular side of the membrane; it reads NWRKLRLITFNRNEKNLTIYTGLWVKCARYDGSSDCLMYDRTWYLSVDQLDLRVLQ. A helical membrane pass occupies residues 88–108; that stretch reads FALPLSIVIAMGALLLCLIGM. The Cytoplasmic portion of the chain corresponds to 109–135; sequence CNTAFNSSVPNIKLAKCLVNSAGCHLV. Residues 136-156 form a helical membrane-spanning segment; the sequence is AGLLFFLAGTVSLSPSIWAIF. Topologically, residues 157–174 are extracellular; the sequence is YNSHLNRKFEPVFTFDYA. A helical membrane pass occupies residues 175-195; the sequence is VFVTIASSGGLFMTALLLFVW. Residues 196–244 lie on the Cytoplasmic side of the membrane; the sequence is YCACKSLSSPFWQPLYSHAPGMHTYSQPYSSRSRLSAIEIDIPVVSHST. Phosphoserine occurs at positions 228 and 231.

The protein belongs to the claudin family. As to quaternary structure, interacts with OCLN.

The protein localises to the cell junction. The protein resides in the tight junction. It is found in the cell membrane. Its function is as follows. Plays a major role in tight junction-specific obliteration of the intercellular space, through calcium-independent cell-adhesion activity. This Mus musculus (Mouse) protein is Claudin-12 (Cldn12).